The sequence spans 221 residues: Octanoyltransferase (221 aa).

The BPL/LPL catalytic domain occupies 36–221 (KKEDNQLFFC…LRSIFMEIFA (186 aa)). Substrate is bound by residues 81 to 88 (RGGDITYH), 154 to 156 (AIG), and 167 to 169 (GFA). Residue cysteine 185 is the Acyl-thioester intermediate of the active site.

The protein belongs to the LipB family.

Its subcellular location is the cytoplasm. The enzyme catalyses octanoyl-[ACP] + L-lysyl-[protein] = N(6)-octanoyl-L-lysyl-[protein] + holo-[ACP] + H(+). Its pathway is protein modification; protein lipoylation via endogenous pathway; protein N(6)-(lipoyl)lysine from octanoyl-[acyl-carrier-protein]: step 1/2. Functionally, catalyzes the transfer of endogenously produced octanoic acid from octanoyl-acyl-carrier-protein onto the lipoyl domains of lipoate-dependent enzymes. Lipoyl-ACP can also act as a substrate although octanoyl-ACP is likely to be the physiological substrate. This Parabacteroides distasonis (strain ATCC 8503 / DSM 20701 / CIP 104284 / JCM 5825 / NCTC 11152) protein is Octanoyltransferase.